Reading from the N-terminus, the 236-residue chain is Leucyl/phenylalanyl-tRNA--protein transferase (236 aa).

The protein belongs to the L/F-transferase family.

It localises to the cytoplasm. It catalyses the reaction N-terminal L-lysyl-[protein] + L-leucyl-tRNA(Leu) = N-terminal L-leucyl-L-lysyl-[protein] + tRNA(Leu) + H(+). The enzyme catalyses N-terminal L-arginyl-[protein] + L-leucyl-tRNA(Leu) = N-terminal L-leucyl-L-arginyl-[protein] + tRNA(Leu) + H(+). It carries out the reaction L-phenylalanyl-tRNA(Phe) + an N-terminal L-alpha-aminoacyl-[protein] = an N-terminal L-phenylalanyl-L-alpha-aminoacyl-[protein] + tRNA(Phe). Functions in the N-end rule pathway of protein degradation where it conjugates Leu, Phe and, less efficiently, Met from aminoacyl-tRNAs to the N-termini of proteins containing an N-terminal arginine or lysine. This chain is Leucyl/phenylalanyl-tRNA--protein transferase, found in Idiomarina loihiensis (strain ATCC BAA-735 / DSM 15497 / L2-TR).